The sequence spans 239 residues: Skn-1 dependent zygotic transcript 1 protein (239 aa).

As to expression, expressed in mesendodermal precursor cells of embryos.

May have a role in mesendoderm development during embryogenesis. This chain is Skn-1 dependent zygotic transcript 1 protein (sdz-1), found in Caenorhabditis elegans.